Reading from the N-terminus, the 84-residue chain is Exodeoxyribonuclease 7 small subunit (84 aa).

The tract at residues 65-84 (QEGDWTTSPFEPASGEPPGG) is disordered.

The protein belongs to the XseB family. As to quaternary structure, heterooligomer composed of large and small subunits.

It is found in the cytoplasm. It catalyses the reaction Exonucleolytic cleavage in either 5'- to 3'- or 3'- to 5'-direction to yield nucleoside 5'-phosphates.. Functionally, bidirectionally degrades single-stranded DNA into large acid-insoluble oligonucleotides, which are then degraded further into small acid-soluble oligonucleotides. The polypeptide is Exodeoxyribonuclease 7 small subunit (Syntrophobacter fumaroxidans (strain DSM 10017 / MPOB)).